Here is a 504-residue protein sequence, read N- to C-terminus: ATP synthase subunit alpha 2 (504 aa).

Residue 169 to 176 (GDRQTGKT) participates in ATP binding.

This sequence belongs to the ATPase alpha/beta chains family. As to quaternary structure, F-type ATPases have 2 components, CF(1) - the catalytic core - and CF(0) - the membrane proton channel. CF(1) has five subunits: alpha(3), beta(3), gamma(1), delta(1), epsilon(1). CF(0) has three main subunits: a(1), b(2) and c(9-12). The alpha and beta chains form an alternating ring which encloses part of the gamma chain. CF(1) is attached to CF(0) by a central stalk formed by the gamma and epsilon chains, while a peripheral stalk is formed by the delta and b chains.

It is found in the cell membrane. It carries out the reaction ATP + H2O + 4 H(+)(in) = ADP + phosphate + 5 H(+)(out). Produces ATP from ADP in the presence of a proton gradient across the membrane. The alpha chain is a regulatory subunit. The protein is ATP synthase subunit alpha 2 of Listeria monocytogenes serotype 4b (strain F2365).